The chain runs to 192 residues: MHTMATALTLEPTALPSDAIEVGRIADAWGLQGWFKVQPYSADPEALFSCKRWYLQPAARGAKAFGGTVLLPIRQAKDHGGMVLAWAQDIDDRNTAEALRGARIFVPRSSFPSPPPGEYYWVDLIGLQVINRQGLALGQVRELRATGAQTLLVLAHEQDGKAGKRMIPFVPAFVDQVELPQKRIIVDWQPDY.

Residues 116–192 (PGEYYWVDLI…RIIVDWQPDY (77 aa)) enclose the PRC barrel domain.

Belongs to the RimM family. Binds ribosomal protein uS19.

It localises to the cytoplasm. Functionally, an accessory protein needed during the final step in the assembly of 30S ribosomal subunit, possibly for assembly of the head region. Essential for efficient processing of 16S rRNA. May be needed both before and after RbfA during the maturation of 16S rRNA. It has affinity for free ribosomal 30S subunits but not for 70S ribosomes. The protein is Ribosome maturation factor RimM of Verminephrobacter eiseniae (strain EF01-2).